A 353-amino-acid chain; its full sequence is Photosystem II D2 protein (353 aa).

N-acetylthreonine is present on Thr-2. Residue Thr-2 is modified to Phosphothreonine. Residues Cys-41 to Thr-61 form a helical membrane-spanning segment. A chlorophyll a-binding site is contributed by His-118. The chain crosses the membrane as a helical span at residues Gly-125–Pro-141. Pheophytin a-binding residues include Gln-130 and Asn-143. Residues Val-153–Ser-166 traverse the membrane as a helical segment. His-198 contributes to the chlorophyll a binding site. Residues Ala-208–Asp-228 traverse the membrane as a helical segment. A plastoquinone-binding residues include His-215 and Phe-262. His-215 provides a ligand contact to Fe cation. His-269 is a binding site for Fe cation. The chain crosses the membrane as a helical span at residues Gly-279 to Arg-295.

It belongs to the reaction center PufL/M/PsbA/D family. As to quaternary structure, PSII is composed of 1 copy each of membrane proteins PsbA, PsbB, PsbC, PsbD, PsbE, PsbF, PsbH, PsbI, PsbJ, PsbK, PsbL, PsbM, PsbT, PsbX, PsbY, PsbZ, Psb30/Ycf12, at least 3 peripheral proteins of the oxygen-evolving complex and a large number of cofactors. It forms dimeric complexes. The D1/D2 heterodimer binds P680, chlorophylls that are the primary electron donor of PSII, and subsequent electron acceptors. It shares a non-heme iron and each subunit binds pheophytin, quinone, additional chlorophylls, carotenoids and lipids. There is also a Cl(-1) ion associated with D1 and D2, which is required for oxygen evolution. The PSII complex binds additional chlorophylls, carotenoids and specific lipids. is required as a cofactor.

It localises to the plastid. It is found in the chloroplast thylakoid membrane. The catalysed reaction is 2 a plastoquinone + 4 hnu + 2 H2O = 2 a plastoquinol + O2. Functionally, photosystem II (PSII) is a light-driven water:plastoquinone oxidoreductase that uses light energy to abstract electrons from H(2)O, generating O(2) and a proton gradient subsequently used for ATP formation. It consists of a core antenna complex that captures photons, and an electron transfer chain that converts photonic excitation into a charge separation. The D1/D2 (PsbA/PsbD) reaction center heterodimer binds P680, the primary electron donor of PSII as well as several subsequent electron acceptors. D2 is needed for assembly of a stable PSII complex. The protein is Photosystem II D2 protein of Arabis hirsuta (Hairy rock-cress).